We begin with the raw amino-acid sequence, 321 residues long: Probable arabinan endo-1,5-alpha-L-arabinosidase C (321 aa).

An N-terminal signal peptide occupies residues 1 to 18 (MYLYTLILLFLASANVNA). Catalysis depends on Asp-33, which acts as the Proton acceptor. Asn-192 carries N-linked (GlcNAc...) asparagine glycosylation. The Proton donor role is filled by Glu-200. Asn-224 carries an N-linked (GlcNAc...) asparagine glycan.

The protein belongs to the glycosyl hydrolase 43 family.

It is found in the secreted. It catalyses the reaction Endohydrolysis of (1-&gt;5)-alpha-arabinofuranosidic linkages in (1-&gt;5)-arabinans.. Its pathway is glycan metabolism; L-arabinan degradation. Functionally, endo-1,5-alpha-L-arabinanase involved in degradation of pectin. Its preferred substrate is linear 1,5-alpha-L-arabinan. This Aspergillus fumigatus (strain CBS 144.89 / FGSC A1163 / CEA10) (Neosartorya fumigata) protein is Probable arabinan endo-1,5-alpha-L-arabinosidase C (abnC).